Here is a 142-residue protein sequence, read N- to C-terminus: MKTFTAKPETVKRDWFVVDAAGQTLGRLATEIASRLRGKHKPEYTPHVDTGDYIVVINAEQIRVTGAKTTDKIYYSHSGFPGGIKSINFEKLIAKAPERVIETAVKGMLPKNPLGRDMYRKLKVYAGAVHPHTAQQPLELKF.

Belongs to the universal ribosomal protein uL13 family. Part of the 50S ribosomal subunit.

In terms of biological role, this protein is one of the early assembly proteins of the 50S ribosomal subunit, although it is not seen to bind rRNA by itself. It is important during the early stages of 50S assembly. This chain is Large ribosomal subunit protein uL13, found in Pseudomonas syringae pv. tomato (strain ATCC BAA-871 / DC3000).